A 1450-amino-acid chain; its full sequence is Inactive serine/threonine-protein kinase TEX14 (1450 aa).

ANK repeat units follow at residues 27–54 (LHEY…AVNT), 55–84 (QGQS…DPNH), and 88–117 (DGST…DLRL). Residues S175 and S186 each carry the phosphoserine modification. The Protein kinase domain occupies 199–512 (IISAQNIYSF…ILKNDLKEFI (314 aa)). Residues 205-213 (IYSFGFGKF) and K267 contribute to the ATP site. Phosphoserine; by PLK1 is present on S431. S561 and S662 each carry phosphoserine. The tract at residues 700–720 (SDSLGSLNLPEPTREAKGKTS) is disordered. Positions 791 to 797 (GPPSLAY) match the GPPX3Y motif. Disordered stretches follow at residues 852-906 (VSEE…MASV), 947-977 (PPWN…RGPE), 992-1012 (DEPK…DKNK), and 1035-1062 (QPEQ…SSPI). Polar residues-rich tracts occupy residues 875–886 (KQSTGEQLPSTQ) and 894–906 (KNTN…MASV). The D-box signature appears at 889-897 (RESLEKNTN). Basic and acidic residues predominate over residues 992-1011 (DEPKGNTKFGKMDNSDCDKN). Positions 1038 to 1061 (QNEASQASCDTSVGTEKFYSTSSP) are enriched in polar residues. Residues S1060 and S1221 each carry the phosphoserine modification. 2 disordered regions span residues 1261–1282 (THAT…QQHL) and 1300–1418 (KQQQ…SLGT). Composition is skewed to polar residues over residues 1300-1311 (KQQQVSSLASHE) and 1332-1344 (TNSS…LSSR). A phosphoserine mark is found at S1357 and S1358. Basic and acidic residues-rich tracts occupy residues 1383-1397 (STRE…VVEQ) and 1404-1413 (SIKPERRESD). Phosphoserine is present on residues S1412 and S1449.

This sequence belongs to the protein kinase superfamily. As to quaternary structure, interacts with KIF23 and RBM44. Interacts with CEP55; inhibiting interaction between CEP55 and PDCD6IP/ALIX and TSG101. Phosphorylated on Thr residues by CDK1 during early phases of mitosis, promoting the interaction with PLK1 and recruitment to kinetochores. Phosphorylated on Ser-431 by PLK1 during late prometaphase promotes the rapid depletion from kinetochores and its subsequent degradation by the APC/C complex. In terms of tissue distribution, detected in testis and spermatogonia. Not detectable in the other tissues tested.

Its subcellular location is the cytoplasm. The protein resides in the midbody. It is found in the chromosome. It localises to the centromere. The protein localises to the kinetochore. In terms of biological role, required both for the formation of intercellular bridges during meiosis and for kinetochore-microtubule attachment during mitosis. Intercellular bridges are evolutionarily conserved structures that connect differentiating germ cells and are required for spermatogenesis and male fertility. Acts by promoting the conversion of midbodies into intercellular bridges via its interaction with CEP55: interaction with CEP55 inhibits the interaction between CEP55 and PDCD6IP/ALIX and TSG101, blocking cell abscission and leading to transform midbodies into intercellular bridges. Also plays a role during mitosis: recruited to kinetochores by PLK1 during early mitosis and regulates the maturation of the outer kinetochores and microtubule attachment. Has no protein kinase activity in vitro. This Mus musculus (Mouse) protein is Inactive serine/threonine-protein kinase TEX14 (Tex14).